The sequence spans 150 residues: Deoxyuridine 5'-triphosphate nucleotidohydrolase (150 aa).

Substrate-binding positions include Arg69–Gly71, Asn82, and Leu86–Asp88.

It belongs to the dUTPase family. The cofactor is Mg(2+).

The catalysed reaction is dUTP + H2O = dUMP + diphosphate + H(+). Its pathway is pyrimidine metabolism; dUMP biosynthesis; dUMP from dCTP (dUTP route): step 2/2. This enzyme is involved in nucleotide metabolism: it produces dUMP, the immediate precursor of thymidine nucleotides and it decreases the intracellular concentration of dUTP so that uracil cannot be incorporated into DNA. This chain is Deoxyuridine 5'-triphosphate nucleotidohydrolase, found in Chromobacterium violaceum (strain ATCC 12472 / DSM 30191 / JCM 1249 / CCUG 213 / NBRC 12614 / NCIMB 9131 / NCTC 9757 / MK).